The sequence spans 122 residues: Large ribosomal subunit protein uL18 (122 aa).

The segment at 1 to 24 is disordered; the sequence is MSTLSRKQQTQKRHRRLRRHLSGT. Over residues 9 to 21 the composition is skewed to basic residues; that stretch reads QTQKRHRRLRRHL.

It belongs to the universal ribosomal protein uL18 family. In terms of assembly, part of the 50S ribosomal subunit; part of the 5S rRNA/L5/L18/L25 subcomplex. Contacts the 5S and 23S rRNAs.

In terms of biological role, this is one of the proteins that bind and probably mediate the attachment of the 5S RNA into the large ribosomal subunit, where it forms part of the central protuberance. In Synechococcus sp. (strain WH7803), this protein is Large ribosomal subunit protein uL18.